Consider the following 394-residue polypeptide: Elongation factor Tu (394 aa).

One can recognise a tr-type G domain in the interval 10 to 204 (KPHINVGTIG…SLDKYIPIPV (195 aa)). The segment at 19–26 (GHVDHGKT) is G1. 19–26 (GHVDHGKT) provides a ligand contact to GTP. Threonine 26 is a binding site for Mg(2+). The segment at 60 to 64 (GITIN) is G2. Residues 81 to 84 (DCPG) are G3. GTP contacts are provided by residues 81–85 (DCPGH) and 136–139 (NKCD). The tract at residues 136 to 139 (NKCD) is G4. The interval 174–176 (SAL) is G5.

Belongs to the TRAFAC class translation factor GTPase superfamily. Classic translation factor GTPase family. EF-Tu/EF-1A subfamily. As to quaternary structure, monomer.

The protein localises to the cytoplasm. The catalysed reaction is GTP + H2O = GDP + phosphate + H(+). GTP hydrolase that promotes the GTP-dependent binding of aminoacyl-tRNA to the A-site of ribosomes during protein biosynthesis. This chain is Elongation factor Tu, found in Buchnera aphidicola subsp. Cinara cedri (strain Cc).